Here is a 214-residue protein sequence, read N- to C-terminus: Methylthioribulose-1-phosphate dehydratase (214 aa).

Residues H103 and H105 each contribute to the Zn(2+) site.

The protein belongs to the aldolase class II family. MtnB subfamily. It depends on Zn(2+) as a cofactor.

The enzyme catalyses 5-(methylsulfanyl)-D-ribulose 1-phosphate = 5-methylsulfanyl-2,3-dioxopentyl phosphate + H2O. Its pathway is amino-acid biosynthesis; L-methionine biosynthesis via salvage pathway; L-methionine from S-methyl-5-thio-alpha-D-ribose 1-phosphate: step 2/6. Functionally, catalyzes the dehydration of methylthioribulose-1-phosphate (MTRu-1-P) into 2,3-diketo-5-methylthiopentyl-1-phosphate (DK-MTP-1-P). This is Methylthioribulose-1-phosphate dehydratase from Granulibacter bethesdensis (strain ATCC BAA-1260 / CGDNIH1).